The primary structure comprises 97 residues: Large ribosomal subunit protein bL27 (97 aa).

A propeptide spanning residues 1–12 is cleaved from the precursor; it reads MLKMNLANLQLF. The interval 14–37 is disordered; the sequence is HKKGGGSTSNGRDSQAKRLGAKAA.

Belongs to the bacterial ribosomal protein bL27 family. Post-translationally, the N-terminus is cleaved by ribosomal processing cysteine protease Prp.

The protein is Large ribosomal subunit protein bL27 of Streptococcus gordonii (strain Challis / ATCC 35105 / BCRC 15272 / CH1 / DL1 / V288).